The chain runs to 145 residues: D-aminoacyl-tRNA deacylase (145 aa).

The Gly-cisPro motif, important for rejection of L-amino acids motif lies at 137 to 138; that stretch reads GP.

It belongs to the DTD family. In terms of assembly, homodimer.

The protein localises to the cytoplasm. The enzyme catalyses glycyl-tRNA(Ala) + H2O = tRNA(Ala) + glycine + H(+). It catalyses the reaction a D-aminoacyl-tRNA + H2O = a tRNA + a D-alpha-amino acid + H(+). In terms of biological role, an aminoacyl-tRNA editing enzyme that deacylates mischarged D-aminoacyl-tRNAs. Also deacylates mischarged glycyl-tRNA(Ala), protecting cells against glycine mischarging by AlaRS. Acts via tRNA-based rather than protein-based catalysis; rejects L-amino acids rather than detecting D-amino acids in the active site. By recycling D-aminoacyl-tRNA to D-amino acids and free tRNA molecules, this enzyme counteracts the toxicity associated with the formation of D-aminoacyl-tRNA entities in vivo and helps enforce protein L-homochirality. This is D-aminoacyl-tRNA deacylase from Pseudomonas aeruginosa (strain LESB58).